The sequence spans 590 residues: Conglutin beta 4 (590 aa).

An N-terminal signal peptide occupies residues Met-1 to Gly-30. Positions His-38–Glu-105 are enriched in basic and acidic residues. Residues His-38–Tyr-175 form a disordered region. Low complexity predominate over residues Gln-137–Gln-146. A Cupin type-1 1 domain is found at Tyr-174–Gln-332. Asn-239 is a glycosylation site (N-linked (GlcNAc...) asparagine). Disordered stretches follow at residues Asp-340–Val-362 and Lys-374–Asn-396. Residues Glu-346 to Val-362 are compositionally biased toward basic and acidic residues. The 158-residue stretch at Phe-391 to Glu-548 folds into the Cupin type-1 2 domain. N-linked (GlcNAc...) asparagine glycosylation is present at Asn-498. The tract at residues Phe-559–Arg-579 is disordered.

This sequence belongs to the 7S seed storage protein family. As to quaternary structure, component of globulins complexes which accumulate in seeds.

Its function is as follows. Seed storage protein. Accumulates during seed development and is hydrolyzed after germination to provide a carbon and nitrogen source for the developing seedling. The protein is Conglutin beta 4 of Lupinus angustifolius (Narrow-leaved blue lupine).